We begin with the raw amino-acid sequence, 257 residues long: Capsid protein (257 aa).

The Bipartite nuclear localization signal motif lies at 3–20; that stretch reads KRTGDILISTPVSKVRRK. Residues 40-54 carry the Nuclear localization signal motif; sequence KRRSWTYRPMYRKPR. A zinc finger lies at 68-85; sequence CEGPCKVQSYEQRDDVKH. The Nuclear export signal motif lies at 101–122; that stretch reads ITHRVGKRFCIKSIYILGKIWM. Positions 201–248 match the Bipartite nuclear localization signal motif; it reads KRFFKVNTHVVYNHQEQAKYENHTENALLLYMACTHASNPVYATLKIR.

The protein belongs to the geminiviridae capsid protein family. Homomultimer. Binds to single-stranded and double-stranded viral DNA. Interacts (via nuclear localization signals) with host importin alpha-1a.

It is found in the virion. The protein resides in the host nucleus. Its function is as follows. Encapsidates the viral genome into characteristic twinned ('geminate') particles. Binds the genomic viral ssDNA and shuttles it into and out of the cell nucleus. Plays a role in protection of the genome from degradation, virus acquisition and transmission by insect vectors, infectivity, and systemic movement. The CP of monopartite geminiviruses is absolutely essential for virus movement. The sequence is that of Capsid protein from Tomato yellow leaf curl Sardinia virus (isolate Spain-1) (TYLCSV).